The chain runs to 536 residues: Suppressor of cytokine signaling 5 (536 aa).

The interval 1–50 (MDKVGKMWNNFKYRCQNLFGHEGGSRSENVDMNSNRCLSVKKKNISLGDS) is required for interaction with IL4R. The disordered stretch occupies residues 115–175 (SRHAPWGGKK…SVSSRTVGSR (61 aa)). Residues 158–169 (VSSVHDMDSVSS) show a composition bias toward low complexity. Residues 381 to 476 (CYWGVMDRYE…FFEPLLTISL (96 aa)) form the SH2 domain. The SOCS box domain occupies 471–520 (LLTISLNRTFPFSLQYICRAVICRCTTYDGIDGLPLPSMLQDFLKEYHYK).

As to quaternary structure, interacts with EGFR. Interacts with ELOB and ELOC; mediates EGFR ubiquitination and degradation. Interacts with IL4R; inhibits IL4 signaling. Phosphorylated. Phosphorylation is induced by EGF.

It functions in the pathway protein modification; protein ubiquitination. Functionally, SOCS family proteins form part of a classical negative feedback system that regulates cytokine signal transduction. May be a substrate-recognition component of a SCF-like ECS (Elongin BC-CUL2/5-SOCS-box protein) E3 ubiquitin-protein ligase complex which mediates the ubiquitination and subsequent proteasomal degradation of target proteins. Inhibits for instance EGF signaling by mediating the degradation of the EGF receptor/EGFR. Involved in the regulation of T-helper cell differentiation by inhibiting of the IL4 signaling pathway which promotes differentiation into the Th2 phenotype. Can also partially inhibit IL6 and LIF signaling. The sequence is that of Suppressor of cytokine signaling 5 (SOCS5) from Bos taurus (Bovine).